A 133-amino-acid polypeptide reads, in one-letter code: Late embryogenesis abundant protein B19.3 (133 aa).

The interval 1-133 (MASGQQERSE…IDESKFKTKS (133 aa)) is disordered. 3 stretches are compositionally biased toward basic and acidic residues: residues 7–19 (ERSE…REGE), 32–102 (EAQE…EMGR), and 113–133 (GGER…KTKS). 3 repeat units span residues 24-43 (GGTG…GRSR), 44-63 (GGQT…MGHK), and 64-83 (GGET…MGHK). Residues 24 to 83 (GGTGGKTLEAQEHLAEGRSRGGQTRKDQLGEEGYREMGHKGGETRKEQLGEEGYREMGHK) form a 3 X 20 AA tandem repeats region.

Belongs to the small hydrophilic plant seed protein family.

Lea proteins are late embryonic proteins abundant in higher plant seed embryos. This is Late embryogenesis abundant protein B19.3 (B19.3) from Hordeum vulgare (Barley).